A 200-amino-acid polypeptide reads, in one-letter code: Imidazoleglycerol-phosphate dehydratase (200 aa).

It belongs to the imidazoleglycerol-phosphate dehydratase family.

The protein resides in the cytoplasm. It carries out the reaction D-erythro-1-(imidazol-4-yl)glycerol 3-phosphate = 3-(imidazol-4-yl)-2-oxopropyl phosphate + H2O. It participates in amino-acid biosynthesis; L-histidine biosynthesis; L-histidine from 5-phospho-alpha-D-ribose 1-diphosphate: step 6/9. This chain is Imidazoleglycerol-phosphate dehydratase, found in Renibacterium salmoninarum (strain ATCC 33209 / DSM 20767 / JCM 11484 / NBRC 15589 / NCIMB 2235).